Here is a 149-residue protein sequence, read N- to C-terminus: Ribonuclease H (149 aa).

The RNase H type-1 domain maps to 1 to 143; it reads MNAVEIYTDG…ADMLANRGVE (143 aa). Mg(2+)-binding residues include D9, E47, D69, and D135.

Belongs to the RNase H family. Monomer. Requires Mg(2+) as cofactor.

Its subcellular location is the cytoplasm. It carries out the reaction Endonucleolytic cleavage to 5'-phosphomonoester.. Its function is as follows. Endonuclease that specifically degrades the RNA of RNA-DNA hybrids. The sequence is that of Ribonuclease H from Albidiferax ferrireducens (strain ATCC BAA-621 / DSM 15236 / T118) (Rhodoferax ferrireducens).